A 285-amino-acid polypeptide reads, in one-letter code: Pyrroline-5-carboxylate reductase (285 aa).

This sequence belongs to the pyrroline-5-carboxylate reductase family. As to quaternary structure, homotetramer.

The enzyme catalyses L-proline + NADP(+) = (S)-1-pyrroline-5-carboxylate + NADPH + 2 H(+). It carries out the reaction L-proline + NAD(+) = (S)-1-pyrroline-5-carboxylate + NADH + 2 H(+). Its pathway is amino-acid biosynthesis; L-proline biosynthesis; L-proline from L-glutamate 5-semialdehyde: step 1/1. This Kluyveromyces lactis (strain ATCC 8585 / CBS 2359 / DSM 70799 / NBRC 1267 / NRRL Y-1140 / WM37) (Yeast) protein is Pyrroline-5-carboxylate reductase.